The primary structure comprises 103 residues: Large ribosomal subunit protein bL21 (103 aa).

Belongs to the bacterial ribosomal protein bL21 family. In terms of assembly, part of the 50S ribosomal subunit. Contacts protein L20.

Its function is as follows. This protein binds to 23S rRNA in the presence of protein L20. This Clostridium perfringens (strain ATCC 13124 / DSM 756 / JCM 1290 / NCIMB 6125 / NCTC 8237 / Type A) protein is Large ribosomal subunit protein bL21.